Consider the following 404-residue polypeptide: Alkane 1-monooxygenase 1 (404 aa).

4 helical membrane-spanning segments follow: residues 25–45 (HLWILSVLWPATPIIGLYLVS), 47–67 (TGWSIWYGLVLILWYGLVPLI), 94–114 (VLTYLTVPIHYAALIISAWWV), and 119–139 (IGVFEFLALALSLGIVNGLAL). Fe cation is bound by residues His143 and His147. The helical transmembrane segment at 151 to 171 (TFDRWMAKLVLAVVGYGHFFI) threads the bilayer. His173, His177, and His178 together coordinate Fe cation. The chain crosses the membrane as a helical span at residues 241–261 (VVLYAALLAFFGPLMLIFLPI). Positions 317, 320, and 321 each coordinate Fe cation.

Belongs to the fatty acid desaturase type 1 family. AlkB subfamily. Fe(3+) is required as a cofactor.

The protein localises to the cell inner membrane. It carries out the reaction octane + 2 reduced [rubredoxin] + O2 + 2 H(+) = 2 oxidized [rubredoxin] + octan-1-ol + H2O. It functions in the pathway hydrocarbon metabolism; alkane degradation. Functionally, catalyzes the hydroxylation of n-alkanes and fatty acids in the presence of a NADH-rubredoxin reductase and rubredoxin. It preferably hydroxylases C5-C12 hydrocarbons. This chain is Alkane 1-monooxygenase 1 (alkB1), found in Alcanivorax borkumensis (strain ATCC 700651 / DSM 11573 / NCIMB 13689 / SK2).